We begin with the raw amino-acid sequence, 115 residues long: Ribonuclease P protein component (115 aa).

This sequence belongs to the RnpA family. In terms of assembly, consists of a catalytic RNA component (M1 or rnpB) and a protein subunit.

It carries out the reaction Endonucleolytic cleavage of RNA, removing 5'-extranucleotides from tRNA precursor.. Functionally, RNaseP catalyzes the removal of the 5'-leader sequence from pre-tRNA to produce the mature 5'-terminus. It can also cleave other RNA substrates such as 4.5S RNA. The protein component plays an auxiliary but essential role in vivo by binding to the 5'-leader sequence and broadening the substrate specificity of the ribozyme. This chain is Ribonuclease P protein component, found in Bacillus mycoides (strain KBAB4) (Bacillus weihenstephanensis).